The chain runs to 420 residues: Glycogen synthase kinase-3 beta (420 aa).

Residues 1-22 (MSGRPRTTSFAESCKPVQQPSA) show a composition bias toward polar residues. The disordered stretch occupies residues 1–53 (MSGRPRTTSFAESCKPVQQPSAFGSMKVSRDKDGSKVTTVVATPGQGPDRPQE). A Phosphoserine; by PKB/AKT1, RPS6KA3 and SGK3 modification is found at serine 9. Cysteine 14 carries S-palmitoyl cysteine lipidation. Residues 56 to 340 (YTDTKVIGNG…PLEACAHSFF (285 aa)) form the Protein kinase domain. Residues 62–70 (IGNGSFGVV) and lysine 85 each bind ATP. Aspartate 181 serves as the catalytic Proton acceptor. Tyrosine 216 is modified (phosphotyrosine). The disordered stretch occupies residues 385-420 (QAAASPPANATAASDTNAGDRGQTNNAASASASNST). Low complexity-rich tracts occupy residues 386 to 401 (AAAS…SDTN) and 409 to 420 (NNAASASASNST). At serine 389 the chain carries Phosphoserine.

It belongs to the protein kinase superfamily. CMGC Ser/Thr protein kinase family. GSK-3 subfamily. As to quaternary structure, monomer. Interacts with DAB2IP (via C2 domain); the interaction stimulates GSK3B kinase activation. Interacts (via C2 domain) with PPP2CA. Interacts with CABYR, MMP2, MUC1, NIN and PRUNE1. Interacts with AXIN1; the interaction mediates hyperphosphorylation of CTNNB1 leading to its ubiquitination and destruction. Interacts with and phosphorylates SNAI1. Interacts with DNM1L (via a C-terminal domain). Interacts with ARRB2. Interacts with DISC1. Found in a complex composed of MACF1, APC, AXIN1, CTNNB1 and GSK3B. Interacts with SGK3. Interacts with the CLOCK-BMAL1 heterodimer. Interacts with ZBED3. Interacts with the BMAL1. The complex composed, at least, of APC, CTNNB1 and GSK3B interacts with JPT1; the interaction requires the inactive form of GSK3B (phosphorylated at 'Ser-9'). Forms a complex composed of PRKAR2A or PRKAR2B, GSK3B and GSKIP through GSKIP interaction; facilitates PKA-induced phosphorylation and regulates GSK3B activity. Interacts with GSKIP. Interacts with GID8. Interacts with PIWIL2. Interacts with LMBR1L. Interacts with DDX3X. Interacts with BIRC2. Interacts with TNFRSF10B; TNFRSF10B stimulation inhibits GSK3B kinase activity. Found in a complex with SLC39A6, SLC39A10 and with GSK3B that controls NCAM1 phosphorylation. Interacts with PKP3 (via ARM repeats); the interaction may be involved in PKP3 protein degradation. Post-translationally, phosphorylated by AKT1 and ILK1. Upon insulin-mediated signaling, the activated PKB/AKT1 protein kinase phosphorylates and deactivates GSK3B, resulting in the dephosphorylation and activation of GYS1. Activated by phosphorylation at Tyr-216. Phosphorylation of Ser-9 in the hippocampus peaks at CT0, whereas in the liver it peaks at CT12. Inactivated by phosphorylation at Ser-9. Phosphorylated in a circadian manner in the hippocampus. In terms of processing, mono-ADP-ribosylation by PARP10 negatively regulates kinase activity. Palmitoylated. Palmitoylation by ZDHHC4 prevents AKT1-mediated phosphorylation. Expressed in the liver (at protein level).

Its subcellular location is the cytoplasm. The protein localises to the nucleus. The protein resides in the cell membrane. It catalyses the reaction L-seryl-[tau protein] + ATP = O-phospho-L-seryl-[tau protein] + ADP + H(+). It carries out the reaction L-threonyl-[tau protein] + ATP = O-phospho-L-threonyl-[tau protein] + ADP + H(+). The catalysed reaction is L-seryl-[protein] + ATP = O-phospho-L-seryl-[protein] + ADP + H(+). The enzyme catalyses L-threonyl-[protein] + ATP = O-phospho-L-threonyl-[protein] + ADP + H(+). Activated by phosphorylation at Tyr-216. In response to insulin, inhibited by phosphorylation at Ser-9 by PKB/AKT1 and RPS6KA3; phosphorylation at this site causes a conformational change, preventing access of substrates to the active site. Inhibited by IL22 treatment which also triggers phosphorylation at Ser-9, promoting inactivation. Inhibited by lithium. Functionally, constitutively active protein kinase that acts as a negative regulator in the hormonal control of glucose homeostasis, Wnt signaling and regulation of transcription factors and microtubules, by phosphorylating and inactivating glycogen synthase (GYS1 or GYS2), EIF2B, CTNNB1/beta-catenin, APC, AXIN1, DPYSL2/CRMP2, JUN, NFATC1/NFATC, MAPT/TAU and MACF1. Requires primed phosphorylation of the majority of its substrates. In skeletal muscle, contributes to insulin regulation of glycogen synthesis by phosphorylating and inhibiting GYS1 activity and hence glycogen synthesis. May also mediate the development of insulin resistance by regulating activation of transcription factors. Regulates protein synthesis by controlling the activity of initiation factor 2B (EIF2BE/EIF2B5) in the same manner as glycogen synthase. In Wnt signaling, GSK3B forms a multimeric complex with APC, AXIN1 and CTNNB1/beta-catenin and phosphorylates the N-terminus of CTNNB1 leading to its degradation mediated by ubiquitin/proteasomes. Phosphorylates JUN at sites proximal to its DNA-binding domain, thereby reducing its affinity for DNA. Phosphorylates NFATC1/NFATC on conserved serine residues promoting NFATC1/NFATC nuclear export, shutting off NFATC1/NFATC gene regulation, and thereby opposing the action of calcineurin. Phosphorylates MAPT/TAU on 'Thr-548', decreasing significantly MAPT/TAU ability to bind and stabilize microtubules. MAPT/TAU is the principal component of neurofibrillary tangles in Alzheimer disease. Plays an important role in ERBB2-dependent stabilization of microtubules at the cell cortex. Phosphorylates MACF1, inhibiting its binding to microtubules which is critical for its role in bulge stem cell migration and skin wound repair. Probably regulates NF-kappa-B (NFKB1) at the transcriptional level and is required for the NF-kappa-B-mediated anti-apoptotic response to TNF-alpha (TNF/TNFA). Negatively regulates replication in pancreatic beta-cells, resulting in apoptosis, loss of beta-cells and diabetes. Through phosphorylation of the anti-apoptotic protein MCL1, may control cell apoptosis in response to growth factors deprivation. Phosphorylates MUC1 in breast cancer cells, decreasing the interaction of MUC1 with CTNNB1/beta-catenin. Is necessary for the establishment of neuronal polarity and axon outgrowth. Phosphorylates MARK2, leading to inhibition of its activity. Phosphorylates SIK1 at 'Thr-182', leading to sustainment of its activity. Phosphorylates ZC3HAV1 which enhances its antiviral activity. Phosphorylates SNAI1, leading to its ubiquitination and proteasomal degradation. Phosphorylates SFPQ at 'Thr-687' upon T-cell activation. Phosphorylates NR1D1 st 'Ser-55' and 'Ser-59' and stabilizes it by protecting it from proteasomal degradation. Regulates the circadian clock via phosphorylation of the major clock components including BMAL1, CLOCK and PER2. Phosphorylates CLOCK AT 'Ser-427' and targets it for proteasomal degradation. Phosphorylates BMAL1 at 'Ser-17' and 'Ser-21' and primes it for ubiquitination and proteasomal degradation. Phosphorylates FBXL2 at 'Thr-404' and primes it for ubiquitination by the SCF(FBXO3) complex and proteasomal degradation. Phosphorylates OGT at 'Ser-3' or 'Ser-4' which positively regulates its activity. Phosphorylates MYCN in neuroblastoma cells which may promote its degradation. Regulates the circadian rhythmicity of hippocampal long-term potentiation and BMAL1 and PER2 expression. Acts as a regulator of autophagy by mediating phosphorylation of KAT5/TIP60 under starvation conditions, activating KAT5/TIP60 acetyltransferase activity and promoting acetylation of key autophagy regulators, such as ULK1 and RUBCNL/Pacer. Negatively regulates extrinsic apoptotic signaling pathway via death domain receptors. Promotes the formation of an anti-apoptotic complex, made of DDX3X, BRIC2 and GSK3B, at death receptors, including TNFRSF10B. The anti-apoptotic function is most effective with weak apoptotic signals and can be overcome by stronger stimulation. Phosphorylates E2F1, promoting the interaction between E2F1 and USP11, stabilizing E2F1 and promoting its activity. Phosphorylates mTORC2 complex component RICTOR at 'Ser-1235' in response to endoplasmic stress, inhibiting mTORC2. Phosphorylates FXR1, promoting FXR1 ubiquitination by the SCF(FBXO4) complex and FXR1 degradation by the proteasome. Phosphorylates interleukin-22 receptor subunit IL22RA1, preventing its proteasomal degradation. This is Glycogen synthase kinase-3 beta from Mus musculus (Mouse).